The sequence spans 420 residues: Serine hydroxymethyltransferase (420 aa).

(6S)-5,6,7,8-tetrahydrofolate contacts are provided by residues Leu-121 and 125 to 127 (GHL). Lys-229 is modified (N6-(pyridoxal phosphate)lysine).

Belongs to the SHMT family. In terms of assembly, homodimer. It depends on pyridoxal 5'-phosphate as a cofactor.

The protein resides in the cytoplasm. It carries out the reaction (6R)-5,10-methylene-5,6,7,8-tetrahydrofolate + glycine + H2O = (6S)-5,6,7,8-tetrahydrofolate + L-serine. The protein operates within one-carbon metabolism; tetrahydrofolate interconversion. Its pathway is amino-acid biosynthesis; glycine biosynthesis; glycine from L-serine: step 1/1. Catalyzes the reversible interconversion of serine and glycine with tetrahydrofolate (THF) serving as the one-carbon carrier. This reaction serves as the major source of one-carbon groups required for the biosynthesis of purines, thymidylate, methionine, and other important biomolecules. Also exhibits THF-independent aldolase activity toward beta-hydroxyamino acids, producing glycine and aldehydes, via a retro-aldol mechanism. The chain is Serine hydroxymethyltransferase from Wigglesworthia glossinidia brevipalpis.